The following is a 53-amino-acid chain: uncharacterized protein (53 aa).

This is an uncharacterized protein from Homo sapiens (Human).